Here is a 237-residue protein sequence, read N- to C-terminus: Ribosomal RNA small subunit methyltransferase G (237 aa).

Residues Gly78, Phe83, 129 to 130 (AE), and Arg148 each bind S-adenosyl-L-methionine.

The protein belongs to the methyltransferase superfamily. RNA methyltransferase RsmG family.

The protein localises to the cytoplasm. Its function is as follows. Specifically methylates the N7 position of a guanine in 16S rRNA. This Streptococcus equi subsp. zooepidemicus (strain H70) protein is Ribosomal RNA small subunit methyltransferase G.